Here is a 235-residue protein sequence, read N- to C-terminus: NAD(P)H-hydrate epimerase (235 aa).

The YjeF N-terminal domain maps to 12–218 (AIVMDQLLMG…EFLKETNLTI (207 aa)). 62-66 (NNGGD) lines the (6S)-NADPHX pocket. 2 residues coordinate K(+): Asn63 and Asp127. Residues 131–137 (GYSFKGD) and Asp161 each bind (6S)-NADPHX. Ser164 contributes to the K(+) binding site.

Belongs to the NnrE/AIBP family. It depends on K(+) as a cofactor.

The catalysed reaction is (6R)-NADHX = (6S)-NADHX. It catalyses the reaction (6R)-NADPHX = (6S)-NADPHX. Functionally, catalyzes the epimerization of the S- and R-forms of NAD(P)HX, a damaged form of NAD(P)H that is a result of enzymatic or heat-dependent hydration. This is a prerequisite for the S-specific NAD(P)H-hydrate dehydratase to allow the repair of both epimers of NAD(P)HX. In Dictyostelium discoideum (Social amoeba), this protein is NAD(P)H-hydrate epimerase.